The primary structure comprises 179 residues: Probable chorismate pyruvate-lyase (179 aa).

The substrate site is built by arginine 82, leucine 120, and glutamate 165.

The protein belongs to the UbiC family.

The protein localises to the cytoplasm. The enzyme catalyses chorismate = 4-hydroxybenzoate + pyruvate. It participates in cofactor biosynthesis; ubiquinone biosynthesis. Its function is as follows. Removes the pyruvyl group from chorismate, with concomitant aromatization of the ring, to provide 4-hydroxybenzoate (4HB) for the ubiquinone pathway. The protein is Probable chorismate pyruvate-lyase of Vibrio parahaemolyticus serotype O3:K6 (strain RIMD 2210633).